Reading from the N-terminus, the 214-residue chain is NADH-quinone oxidoreductase subunit C (214 aa).

It belongs to the complex I 30 kDa subunit family. NDH-1 is composed of 14 different subunits. Subunits NuoB, C, D, E, F, and G constitute the peripheral sector of the complex.

The protein localises to the cell inner membrane. The enzyme catalyses a quinone + NADH + 5 H(+)(in) = a quinol + NAD(+) + 4 H(+)(out). Its function is as follows. NDH-1 shuttles electrons from NADH, via FMN and iron-sulfur (Fe-S) centers, to quinones in the respiratory chain. The immediate electron acceptor for the enzyme in this species is believed to be ubiquinone. Couples the redox reaction to proton translocation (for every two electrons transferred, four hydrogen ions are translocated across the cytoplasmic membrane), and thus conserves the redox energy in a proton gradient. The sequence is that of NADH-quinone oxidoreductase subunit C from Francisella tularensis subsp. tularensis (strain WY96-3418).